A 1281-amino-acid chain; its full sequence is Tubulin polyglutamylase TTLL5 (1281 aa).

The 346-residue stretch at 62–407 (RYHLSYKIVR…VCQDPAQRAS (346 aa)) folds into the TTL domain. ATP is bound by residues K180, 186 to 187 (RG), 208 to 211 (SRYI), and 221 to 223 (KFD). R186 contributes to the a protein binding site. Residue R247 participates in L-glutamate binding. 268–269 (TN) contributes to the ATP binding site. 3 residues coordinate L-glutamate: Y270, S271, and K293. Mg(2+)-binding residues include D353, E366, and N368. The tract at residues 378–488 (PLDLKIKASM…RGGFIRIFPT (111 aa)) is c-MTBD region. K384 is an L-glutamate binding site. Disordered stretches follow at residues 577–614 (MNVK…LREN), 1072–1114 (SASA…LQTG), and 1199–1281 (SSAT…HTKI). The span at 584-604 (ESEEEEEVALDNEDEEQEASQ) shows a compositional bias: acidic residues. 4 stretches are compositionally biased toward polar residues: residues 1086-1113 (SGPT…SLQT), 1199-1212 (SSAT…TTLP), 1240-1263 (ATSQ…SSLN), and 1270-1281 (ITSSTDPAHTKI).

Belongs to the tubulin--tyrosine ligase family. As to quaternary structure, interacts with the transcriptional coactivators NCOA1/SRC-1 and NCOA2/TIF2. Mg(2+) is required as a cofactor. Expressed in the retina, found in the rod and cone photoreceptors (at protein level). Widely expressed with highest levels in heart and skeletal muscle and low levels in other tissues.

Its subcellular location is the cell projection. It is found in the cilium. The protein resides in the cytoplasm. It localises to the cytoskeleton. The protein localises to the cilium basal body. Its subcellular location is the nucleus. The enzyme catalyses L-glutamyl-[protein] + L-glutamate + ATP = gamma-L-glutamyl-L-glutamyl-[protein] + ADP + phosphate + H(+). It catalyses the reaction (L-glutamyl)(n)-gamma-L-glutamyl-L-glutamyl-[protein] + L-glutamate + ATP = (L-glutamyl)(n+1)-gamma-L-glutamyl-L-glutamyl-[protein] + ADP + phosphate + H(+). Polyglutamylase which modifies tubulin, generating polyglutamate side chains on the gamma-carboxyl group of specific glutamate residues within the C-terminal tail of tubulin. Preferentially mediates ATP-dependent initiation step of the polyglutamylation reaction over the elongation step. Preferentially modifies the alpha-tubulin tail over a beta-tail. Required for CCSAP localization to both polyglutamylated spindle and cilia microtubules. Increases the effects of transcriptional coactivator NCOA2/TIF2 in glucocorticoid receptor-mediated repression and induction and in androgen receptor-mediated induction. In Homo sapiens (Human), this protein is Tubulin polyglutamylase TTLL5.